Here is a 136-residue protein sequence, read N- to C-terminus: Transcription antitermination protein NusB (136 aa).

Belongs to the NusB family.

Its function is as follows. Involved in transcription antitermination. Required for transcription of ribosomal RNA (rRNA) genes. Binds specifically to the boxA antiterminator sequence of the ribosomal RNA (rrn) operons. The polypeptide is Transcription antitermination protein NusB (Kineococcus radiotolerans (strain ATCC BAA-149 / DSM 14245 / SRS30216)).